The chain runs to 569 residues: 3-oxosteroid 1-dehydrogenase (569 aa).

10–39 (DVVVVGSGAAGMVAALTAAHQGLSTVVVEK) serves as a coordination point for FAD. Positions 127-148 (PGGKPTGRSVEPKPFDANKLGP) are disordered.

The protein belongs to the FAD-dependent oxidoreductase 2 family. 3-oxosteroid dehydrogenase subfamily. FAD is required as a cofactor.

It carries out the reaction a 3-oxosteroid + A = a 3-oxo-Delta(1)-steroid + AH2. The enzyme catalyses a 3-oxo-Delta(4)-steroid + A = a 3-oxo-Delta(1,4)-steroid + AH2. In terms of biological role, catalyzes the elimination of the C-1 and C-2 hydrogen atoms of the A-ring from the polycyclic ring structure of 3-ketosteroids. Is also involved in the formation of 1,4-androstadiene-3,17-dione (ADD) from 4-androstene-3,17-dione (AD) to. In Mycolicibacterium smegmatis (strain ATCC 700084 / mc(2)155) (Mycobacterium smegmatis), this protein is 3-oxosteroid 1-dehydrogenase (ksdD).